The sequence spans 401 residues: NADH-quinone oxidoreductase subunit D (401 aa).

Belongs to the complex I 49 kDa subunit family. As to quaternary structure, NDH-1 is composed of 15 different subunits. Subunits NuoB, C, D, E, F, and G constitute the peripheral sector of the complex.

Its subcellular location is the cell membrane. The catalysed reaction is a quinone + NADH + 5 H(+)(in) = a quinol + NAD(+) + 4 H(+)(out). In terms of biological role, NDH-1 shuttles electrons from NADH, via FMN and iron-sulfur (Fe-S) centers, to quinones in the respiratory chain. The immediate electron acceptor for the enzyme in this species is believed to be a menaquinone. Couples the redox reaction to proton translocation (for every two electrons transferred, four hydrogen ions are translocated across the cytoplasmic membrane), and thus conserves the redox energy in a proton gradient. This chain is NADH-quinone oxidoreductase subunit D, found in Deinococcus radiodurans (strain ATCC 13939 / DSM 20539 / JCM 16871 / CCUG 27074 / LMG 4051 / NBRC 15346 / NCIMB 9279 / VKM B-1422 / R1).